The following is a 235-amino-acid chain: Carboxy-S-adenosyl-L-methionine synthase (235 aa).

S-adenosyl-L-methionine contacts are provided by residues tyrosine 35, 60–62, 83–84, asparagine 124, and arginine 191; these read GCS and DN.

Belongs to the class I-like SAM-binding methyltransferase superfamily. Cx-SAM synthase family. Homodimer.

The enzyme catalyses prephenate + S-adenosyl-L-methionine = carboxy-S-adenosyl-L-methionine + 3-phenylpyruvate + H2O. Its function is as follows. Catalyzes the conversion of S-adenosyl-L-methionine (SAM) to carboxy-S-adenosyl-L-methionine (Cx-SAM). The polypeptide is Carboxy-S-adenosyl-L-methionine synthase (Campylobacter jejuni subsp. jejuni serotype O:6 (strain 81116 / NCTC 11828)).